Consider the following 321-residue polypeptide: Quinol oxidase subunit 2 (321 aa).

An N-terminal signal peptide occupies residues 1–25 (MIFLFRALKPLLVLALLTVVFVLGG). The N-palmitoyl cysteine moiety is linked to residue C26. C26 is lipidated: S-diacylglycerol cysteine. 2 consecutive transmembrane segments (helical) span residues 49 to 69 (SIGF…IILV) and 90 to 110 (TFLE…LSVP). Residues 294–321 (QAVSPHSKTDPFENVKENEFKKSDDTEE) are disordered. Over residues 300 to 321 (SKTDPFENVKENEFKKSDDTEE) the composition is skewed to basic and acidic residues.

Belongs to the cytochrome c oxidase subunit 2 family.

The protein localises to the cell membrane. The catalysed reaction is 2 a quinol + O2 = 2 a quinone + 2 H2O. Its function is as follows. Catalyzes quinol oxidation with the concomitant reduction of oxygen to water. Major component for energy conversion during vegetative growth. Subunit II transfers the electrons from a quinol to the binuclear center of the catalytic subunit I. This is Quinol oxidase subunit 2 (qoxA) from Bacillus spizizenii (strain ATCC 23059 / NRRL B-14472 / W23) (Bacillus subtilis subsp. spizizenii).